We begin with the raw amino-acid sequence, 275 residues long: Sulfate transporter CysZ (275 aa).

The segment at 1 to 24 (MSSEKSSFPEKPPSFEKPSHSNTA) is disordered. Over residues 13 to 24 (PSFEKPSHSNTA) the composition is skewed to basic and acidic residues. Transmembrane regions (helical) follow at residues 49–69 (FVILPLLMNIVLMGGAFWWLF), 93–113 (LIWPLAVLSILLVFSYLFSTI), 169–189 (IVLLLLYFIPGIGQTVAPVLW), and 232–252 (ALVSLFTLVPFLNLVIMPVAV).

This sequence belongs to the CysZ family.

It localises to the cell inner membrane. Functionally, high affinity, high specificity proton-dependent sulfate transporter, which mediates sulfate uptake. Provides the sulfur source for the cysteine synthesis pathway. The protein is Sulfate transporter CysZ of Pectobacterium atrosepticum (strain SCRI 1043 / ATCC BAA-672) (Erwinia carotovora subsp. atroseptica).